The primary structure comprises 150 residues: Macrodomain Ter protein (150 aa).

It belongs to the MatP family. As to quaternary structure, homodimer.

It localises to the cytoplasm. Its function is as follows. Required for spatial organization of the terminus region of the chromosome (Ter macrodomain) during the cell cycle. Prevents early segregation of duplicated Ter macrodomains during cell division. Binds specifically to matS, which is a 13 bp signature motif repeated within the Ter macrodomain. This is Macrodomain Ter protein from Salmonella agona (strain SL483).